A 411-amino-acid chain; its full sequence is MAQINENYLKLPGSYLFSEIARRVNEFKVQNPDADIIRLGIGDVTRPLAPVVVEAMKQAVEEMGRAETFRGYGPEQGYDFLIEKIIANDYAPRGVQLGMDEVFVSDGAKSDTANFQEIFGVDNIMAVTDPVYPVYVDSNVMAGRTGNYDIEKGQYGRIIYLPCTEEGDMKPELPTAPVDMIYLCFPNNPTGMTLTKEELKVWVDYARENKAIILFDSAYEAFIREEGVPRSIYEVEGAREVAVEFRSFSKTAGFTGTRCAYTVVPKDIMIYDSTGEGHSLNKLWLRRQTTKFNGVSYPVQAGAAAVYTEEGKKQIQATIDYYMENARIIREGLQEAGFKVFGGVNAPYIWMKTPGTMGSWEFFDKLMTEAHVVGTPGAGFGANGEGFFRLTAFGTRENTEKAIERIKARMK.

Substrate contacts are provided by tyrosine 15 and glycine 42. Residues tyrosine 72, 108–109 (AK), tyrosine 132, asparagine 188, tyrosine 219, and 247–249 (SFS) each bind pyridoxal 5'-phosphate. Residues lysine 109, tyrosine 132, and asparagine 188 each coordinate substrate. Lysine 250 carries the post-translational modification N6-(pyridoxal phosphate)lysine. 2 residues coordinate pyridoxal 5'-phosphate: arginine 258 and asparagine 293. Substrate is bound by residues asparagine 293 and arginine 389.

Belongs to the class-I pyridoxal-phosphate-dependent aminotransferase family. LL-diaminopimelate aminotransferase subfamily. Homodimer. It depends on pyridoxal 5'-phosphate as a cofactor.

It carries out the reaction (2S,6S)-2,6-diaminopimelate + 2-oxoglutarate = (S)-2,3,4,5-tetrahydrodipicolinate + L-glutamate + H2O + H(+). The protein operates within amino-acid biosynthesis; L-lysine biosynthesis via DAP pathway; LL-2,6-diaminopimelate from (S)-tetrahydrodipicolinate (aminotransferase route): step 1/1. Involved in the synthesis of meso-diaminopimelate (m-DAP or DL-DAP), required for both lysine and peptidoglycan biosynthesis. Catalyzes the direct conversion of tetrahydrodipicolinate to LL-diaminopimelate. The chain is LL-diaminopimelate aminotransferase from Desulfitobacterium hafniense (strain Y51).